Here is a 1213-residue protein sequence, read N- to C-terminus: DNA-directed RNA polymerase subunit beta' (1213 aa).

Residues Cys60, Cys62, Cys75, and Cys78 each contribute to the Zn(2+) site. Asp450, Asp452, and Asp454 together coordinate Mg(2+). The Zn(2+) site is built by Cys819, Cys893, Cys900, and Cys903.

The protein belongs to the RNA polymerase beta' chain family. In terms of assembly, the RNAP catalytic core consists of 2 alpha, 1 beta, 1 beta' and 1 omega subunit. When a sigma factor is associated with the core the holoenzyme is formed, which can initiate transcription. The cofactor is Mg(2+). Requires Zn(2+) as cofactor.

The enzyme catalyses RNA(n) + a ribonucleoside 5'-triphosphate = RNA(n+1) + diphosphate. DNA-dependent RNA polymerase catalyzes the transcription of DNA into RNA using the four ribonucleoside triphosphates as substrates. The polypeptide is DNA-directed RNA polymerase subunit beta' (Streptococcus pyogenes serotype M28 (strain MGAS6180)).